The chain runs to 382 residues: Histidinol-phosphate aminotransferase (382 aa).

The interval 1–24 is disordered; sequence MTSAPRPRPTLDDLPLREDLRGKS. The span at 9 to 22 shows a compositional bias: basic and acidic residues; it reads PTLDDLPLREDLRG. The residue at position 233 (Lys-233) is an N6-(pyridoxal phosphate)lysine.

This sequence belongs to the class-II pyridoxal-phosphate-dependent aminotransferase family. Histidinol-phosphate aminotransferase subfamily. Homodimer. The cofactor is pyridoxal 5'-phosphate.

It catalyses the reaction L-histidinol phosphate + 2-oxoglutarate = 3-(imidazol-4-yl)-2-oxopropyl phosphate + L-glutamate. It functions in the pathway amino-acid biosynthesis; L-histidine biosynthesis; L-histidine from 5-phospho-alpha-D-ribose 1-diphosphate: step 7/9. The sequence is that of Histidinol-phosphate aminotransferase from Mycobacterium ulcerans (strain Agy99).